A 148-amino-acid chain; its full sequence is Flavodoxin (148 aa).

The region spanning 4–145 (ALIVYGSTTG…DIVGWAHDVR (142 aa)) is the Flavodoxin-like domain.

This sequence belongs to the flavodoxin family. Requires FMN as cofactor.

Functionally, low-potential electron donor to a number of redox enzymes. In Nitratidesulfovibrio vulgaris (strain ATCC 29579 / DSM 644 / CCUG 34227 / NCIMB 8303 / VKM B-1760 / Hildenborough) (Desulfovibrio vulgaris), this protein is Flavodoxin.